Consider the following 490-residue polypeptide: MSTLKQRKEDFVTGLNGGSITEINAVTSIALVTYISWNLLKNSNLMPPGISSVQYIIDFALNWVALLLSITIYASEPYLLNTLILLPCLLAFIYGKFTSSSKPSNPIYNKKKMITQRFQLEKKPYITAYRGGMLILTAIAILAVDFPIFPRRFAKVETWGTSLMDLGVGSFVFSNGIVSSRALLKNLSLKSKPSFLKNAFNALKSGGTLLFLGLLRLFFVKNLEYQEHVTEYGVHWNFFITLSLLPLVLTFIDPVTRMVPRCSIAIFISCIYEWLLLKDDRTLNFLILADRNCFFSANREGIFSFLGYCSIFLWGQNTGFYLLGNKPTLNNLYKPSTQDVVAASKKSSTWDYWTSVTPLSGLCIWSTIFLVISQLVFQYHPYSVSRRFANLPYTLWVITYNLLFLTGYCLTDKIFGNSSEYYKVAECLESINSNGLFLFLLANVSTGLVNMSMVTIDSSPLKSFLVLLAYCSFIAVISVFLYRKRIFIKL.

Residues 1–19 lie on the Lumenal side of the membrane; sequence MSTLKQRKEDFVTGLNGGS. The helical transmembrane segment at 20-40 threads the bilayer; the sequence is ITEINAVTSIALVTYISWNLL. At 41 to 54 the chain is on the cytoplasmic side; sequence KNSNLMPPGISSVQ. The chain crosses the membrane as a helical span at residues 55 to 75; it reads YIIDFALNWVALLLSITIYAS. Position 76 (Glu76) is a topological domain, lumenal. The helical transmembrane segment at 77-97 threads the bilayer; the sequence is PYLLNTLILLPCLLAFIYGKF. The Cytoplasmic segment spans residues 98–128; the sequence is TSSSKPSNPIYNKKKMITQRFQLEKKPYITA. Residues 129 to 149 traverse the membrane as a helical segment; that stretch reads YRGGMLILTAIAILAVDFPIF. The Lumenal segment spans residues 150–157; it reads PRRFAKVE. A helical transmembrane segment spans residues 158-178; the sequence is TWGTSLMDLGVGSFVFSNGIV. At 179 to 199 the chain is on the cytoplasmic side; the sequence is SSRALLKNLSLKSKPSFLKNA. The chain crosses the membrane as a helical span at residues 200-220; the sequence is FNALKSGGTLLFLGLLRLFFV. The Lumenal segment spans residues 221–231; that stretch reads KNLEYQEHVTE. Residues 232 to 252 form a helical membrane-spanning segment; it reads YGVHWNFFITLSLLPLVLTFI. Over 253 to 257 the chain is Cytoplasmic; the sequence is DPVTR. A helical transmembrane segment spans residues 258–278; it reads MVPRCSIAIFISCIYEWLLLK. The Lumenal segment spans residues 279-301; sequence DDRTLNFLILADRNCFFSANREG. Residues 302–322 traverse the membrane as a helical segment; sequence IFSFLGYCSIFLWGQNTGFYL. At 323 to 356 the chain is on the cytoplasmic side; it reads LGNKPTLNNLYKPSTQDVVAASKKSSTWDYWTSV. A helical transmembrane segment spans residues 357 to 377; sequence TPLSGLCIWSTIFLVISQLVF. The Lumenal segment spans residues 378-390; sequence QYHPYSVSRRFAN. The helical transmembrane segment at 391–411 threads the bilayer; the sequence is LPYTLWVITYNLLFLTGYCLT. The Cytoplasmic portion of the chain corresponds to 412-435; the sequence is DKIFGNSSEYYKVAECLESINSNG. Residues 436–456 traverse the membrane as a helical segment; it reads LFLFLLANVSTGLVNMSMVTI. The Lumenal segment spans residues 457–460; the sequence is DSSP. The helical transmembrane segment at 461-481 threads the bilayer; sequence LKSFLVLLAYCSFIAVISVFL. Residues 482 to 490 lie on the Cytoplasmic side of the membrane; the sequence is YRKRIFIKL.

This sequence belongs to the PIGW family.

Its subcellular location is the endoplasmic reticulum membrane. The protein operates within glycolipid biosynthesis; glycosylphosphatidylinositol-anchor biosynthesis. Its function is as follows. Probable acetyltransferase, which acetylates the inositol ring of phosphatidylinositol during biosynthesis of GPI-anchor. Acetylation during GPI-anchor biosynthesis is not essential for the subsequent mannosylation and is usually removed soon after the attachment of GPIs to proteins. The protein is GPI-anchored wall transfer protein 1 (GWT1) of Saccharomyces cerevisiae (strain ATCC 204508 / S288c) (Baker's yeast).